The chain runs to 494 residues: UDP-N-acetylmuramoyl-L-alanyl-D-glutamate--L-lysine ligase (494 aa).

S30 provides a ligand contact to UDP-N-acetyl-alpha-D-muramoyl-L-alanyl-D-glutamate. Position 110–116 (110–116 (GTNGKTS)) interacts with ATP. Residues 152-153 (TT), S179, and R187 each bind UDP-N-acetyl-alpha-D-muramoyl-L-alanyl-D-glutamate. K219 bears the N6-carboxylysine mark. The L-lysine recognition motif motif lies at 406 to 409 (DNPA).

Belongs to the MurCDEF family. MurE subfamily. Post-translationally, carboxylation is probably crucial for Mg(2+) binding and, consequently, for the gamma-phosphate positioning of ATP.

The protein resides in the cytoplasm. The catalysed reaction is UDP-N-acetyl-alpha-D-muramoyl-L-alanyl-D-glutamate + L-lysine + ATP = UDP-N-acetyl-alpha-D-muramoyl-L-alanyl-gamma-D-glutamyl-L-lysine + ADP + phosphate + H(+). It functions in the pathway cell wall biogenesis; peptidoglycan biosynthesis. Functionally, catalyzes the addition of L-lysine to the nucleotide precursor UDP-N-acetylmuramoyl-L-alanyl-D-glutamate (UMAG) in the biosynthesis of bacterial cell-wall peptidoglycan. The polypeptide is UDP-N-acetylmuramoyl-L-alanyl-D-glutamate--L-lysine ligase (Staphylococcus aureus (strain bovine RF122 / ET3-1)).